The following is a 511-amino-acid chain: Caspase-8 (511 aa).

The propeptide occupies 1 to 242 (MSGHNILTQL…MDGNGIANES (242 aa)). Catalysis depends on residues His352 and Cys393. Positions 406-415 (KINASTKSPC) are excised as a propeptide.

It belongs to the peptidase C14A family. As to quaternary structure, heterotetramer that consists of two anti-parallel arranged heterodimers, each one formed by a 15 kDa (caspase-8 subunit p15) and a 10 kDa (caspase-8 subunit p10) subunit. Interacts with the N-terminus of Fadd.

It is found in the cytoplasm. The enzyme catalyses Strict requirement for Asp at position P1 and has a preferred cleavage sequence of (Leu/Asp/Val)-Glu-Thr-Asp-|-(Gly/Ser/Ala).. Functionally, effector of the programmed cell death (PCD) activators rpr, grim and W. May play an apoptotic role in the germline as well as soma. Role in immune response, required to resist Gram-negative bacterial infections by regulating DptA. Fadd interacts with Dredd, Fadd promotes cleavage of Dredd and is necessary and sufficient for enhancing Dredd-induced apoptosis. In Drosophila pseudoobscura pseudoobscura (Fruit fly), this protein is Caspase-8.